The chain runs to 276 residues: MATNGCLISLPPFFTTTKSISSYPFLSTQLKPISLSSSLPTLLSLNKRTTQFPTFVSVLSEDDNTLVLDDQEQGGDFPSFVGEAGETEEYQEPSEDAKLFVGNLPYDIDSEGLAQLFQQAGVVEIAEVIYNRETDRSRGFGFVTMSTVEEADKAVELYSQYDLNGRLLTVNKAAPRGSRPERAPRTFQPTYRIYVGNIPWDIDDARLEQVFSEHGKVVSARVVFDRESGRSRGFGFVTMSSEAEMSEAIANLDGQTLDGRTIRVNAAEERPRRNTY.

Residues 1–57 (MATNGCLISLPPFFTTTKSISSYPFLSTQLKPISLSSSLPTLLSLNKRTTQFPTFVS) constitute a chloroplast transit peptide. 2 consecutive RRM domains span residues 97–175 (AKLF…KAAP) and 191–269 (YRIY…AAEE).

Its subcellular location is the plastid. The protein resides in the chloroplast. Probably involved in the 3'-end processing of chloroplast mRNA's. The chain is 28 kDa ribonucleoprotein, chloroplastic from Nicotiana sylvestris (Wood tobacco).